Reading from the N-terminus, the 384-residue chain is PqqA peptide cyclase (384 aa).

The Radical SAM core domain occupies 5–220; that stretch reads VGLPLWLLAE…TNEYREKLKA (216 aa). [4Fe-4S] cluster is bound by residues Cys19, Cys23, and Cys26.

This sequence belongs to the radical SAM superfamily. PqqE family. Interacts with PqqD. The interaction is necessary for activity of PqqE. It depends on [4Fe-4S] cluster as a cofactor.

The enzyme catalyses [PQQ precursor protein] + S-adenosyl-L-methionine = E-Y cross-linked-[PQQ precursor protein] + 5'-deoxyadenosine + L-methionine + H(+). The protein operates within cofactor biosynthesis; pyrroloquinoline quinone biosynthesis. Catalyzes the cross-linking of a glutamate residue and a tyrosine residue in the PqqA protein as part of the biosynthesis of pyrroloquinoline quinone (PQQ). This Acinetobacter baumannii (strain AB0057) protein is PqqA peptide cyclase.